The following is a 478-amino-acid chain: 2-succinylbenzoate--CoA ligase (478 aa).

This sequence belongs to the ATP-dependent AMP-binding enzyme family. MenE subfamily.

It catalyses the reaction 2-succinylbenzoate + ATP + CoA = 2-succinylbenzoyl-CoA + AMP + diphosphate. Its pathway is quinol/quinone metabolism; 1,4-dihydroxy-2-naphthoate biosynthesis; 1,4-dihydroxy-2-naphthoate from chorismate: step 5/7. It functions in the pathway quinol/quinone metabolism; menaquinone biosynthesis. In terms of biological role, converts 2-succinylbenzoate (OSB) to 2-succinylbenzoyl-CoA (OSB-CoA). This chain is 2-succinylbenzoate--CoA ligase, found in Bacillus licheniformis (strain ATCC 14580 / DSM 13 / JCM 2505 / CCUG 7422 / NBRC 12200 / NCIMB 9375 / NCTC 10341 / NRRL NRS-1264 / Gibson 46).